The sequence spans 498 residues: Probable malate:quinone oxidoreductase 2 (498 aa).

Belongs to the MQO family. Requires FAD as cofactor.

The enzyme catalyses (S)-malate + a quinone = a quinol + oxaloacetate. It participates in carbohydrate metabolism; tricarboxylic acid cycle; oxaloacetate from (S)-malate (quinone route): step 1/1. The sequence is that of Probable malate:quinone oxidoreductase 2 from Staphylococcus aureus (strain MW2).